Reading from the N-terminus, the 493-residue chain is Glycogen synthase 1 (493 aa).

Lys15 contributes to the ADP-alpha-D-glucose binding site.

Belongs to the glycosyltransferase 1 family. Bacterial/plant glycogen synthase subfamily.

It carries out the reaction [(1-&gt;4)-alpha-D-glucosyl](n) + ADP-alpha-D-glucose = [(1-&gt;4)-alpha-D-glucosyl](n+1) + ADP + H(+). It participates in glycan biosynthesis; glycogen biosynthesis. Its function is as follows. Synthesizes alpha-1,4-glucan chains using ADP-glucose. The protein is Glycogen synthase 1 of Methylococcus capsulatus (strain ATCC 33009 / NCIMB 11132 / Bath).